Reading from the N-terminus, the 178-residue chain is Large ribosomal subunit protein uL6 (178 aa).

Belongs to the universal ribosomal protein uL6 family. Part of the 50S ribosomal subunit.

This protein binds to the 23S rRNA, and is important in its secondary structure. It is located near the subunit interface in the base of the L7/L12 stalk, and near the tRNA binding site of the peptidyltransferase center. The protein is Large ribosomal subunit protein uL6 of Shouchella clausii (strain KSM-K16) (Alkalihalobacillus clausii).